A 257-amino-acid polypeptide reads, in one-letter code: Acetylglutamate kinase (257 aa).

Residues 43–44 (GG), Arg65, and Asn157 contribute to the substrate site. Residues 180–185 (DVSGIL) and 208–210 (IIT) contribute to the ATP site.

It belongs to the acetylglutamate kinase family. ArgB subfamily. In terms of assembly, homodimer.

It is found in the cytoplasm. It carries out the reaction N-acetyl-L-glutamate + ATP = N-acetyl-L-glutamyl 5-phosphate + ADP. It functions in the pathway amino-acid biosynthesis; L-arginine biosynthesis; N(2)-acetyl-L-ornithine from L-glutamate: step 2/4. Functionally, catalyzes the ATP-dependent phosphorylation of N-acetyl-L-glutamate. This chain is Acetylglutamate kinase, found in Salmonella schwarzengrund (strain CVM19633).